We begin with the raw amino-acid sequence, 184 residues long: UPF0149 protein Avin_47340 (184 aa).

The protein belongs to the UPF0149 family.

This chain is UPF0149 protein Avin_47340, found in Azotobacter vinelandii (strain DJ / ATCC BAA-1303).